Reading from the N-terminus, the 251-residue chain is UPF0309 protein SCO4393 (251 aa).

Residues 36-220 enclose the SIS domain; it reads LADTVQNGGR…AATLADRGIE (185 aa).

Belongs to the UPF0309 family.

This Streptomyces coelicolor (strain ATCC BAA-471 / A3(2) / M145) protein is UPF0309 protein SCO4393.